We begin with the raw amino-acid sequence, 90 residues long: Trp-8 progonadoliberin (90 aa).

Residues 1–24 form the signal peptide; sequence MSRHVTVVLLLAVVLLLSSHMSHG. Glutamine 25 bears the Pyrrolidone carboxylic acid mark. Glycine amide is present on glycine 34.

It belongs to the GnRH family. Expressed in forebrain but not in testis, ovary, kidney and liver.

It is found in the secreted. Stimulates the secretion of gonadotropins. The protein is Trp-8 progonadoliberin of Rana dybowskii (Dybovsky's frog).